Here is a 308-residue protein sequence, read N- to C-terminus: MSAQKPGLHPRNRHQHRYDLAALCQTTPELTSFLIRTPAGEQSVDFANPQAVKALNKALLAHFYAVTHWDIPPGFLCPPVPGRADYIHHLADLLGETTGSIPAQATILDVGVGANCIYPLIGVHEYGWRFTGSEVSDAAMSSAQAIIQANTGLSRAIRLRRQKDPAAIFTGIIHKNEFYDATLCNPPFHDSAAAARAGSERKRRNLGQNKDDALNFGGQQQELWCEGGEVAFIKKMIAESQSFRRQVLWFTTLVSRGENLPPLYRALAEAGAVKVVKKEMAQGQKQSRFIAWTFMDDDQRRRFITRKR.

It belongs to the methyltransferase superfamily. METTL16/RlmF family.

The protein localises to the cytoplasm. It carries out the reaction adenosine(1618) in 23S rRNA + S-adenosyl-L-methionine = N(6)-methyladenosine(1618) in 23S rRNA + S-adenosyl-L-homocysteine + H(+). Its function is as follows. Specifically methylates the adenine in position 1618 of 23S rRNA. The chain is Ribosomal RNA large subunit methyltransferase F from Salmonella agona (strain SL483).